A 95-amino-acid polypeptide reads, in one-letter code: Glutamyl-tRNA(Gln) amidotransferase subunit C (95 aa).

It belongs to the GatC family. In terms of assembly, heterotrimer of A, B and C subunits.

The enzyme catalyses L-glutamyl-tRNA(Gln) + L-glutamine + ATP + H2O = L-glutaminyl-tRNA(Gln) + L-glutamate + ADP + phosphate + H(+). The catalysed reaction is L-aspartyl-tRNA(Asn) + L-glutamine + ATP + H2O = L-asparaginyl-tRNA(Asn) + L-glutamate + ADP + phosphate + 2 H(+). In terms of biological role, allows the formation of correctly charged Asn-tRNA(Asn) or Gln-tRNA(Gln) through the transamidation of misacylated Asp-tRNA(Asn) or Glu-tRNA(Gln) in organisms which lack either or both of asparaginyl-tRNA or glutaminyl-tRNA synthetases. The reaction takes place in the presence of glutamine and ATP through an activated phospho-Asp-tRNA(Asn) or phospho-Glu-tRNA(Gln). The chain is Glutamyl-tRNA(Gln) amidotransferase subunit C from Rhizobium meliloti (strain 1021) (Ensifer meliloti).